The sequence spans 91 residues: DNA-directed RNA polymerase subunit omega (91 aa).

The protein belongs to the RNA polymerase subunit omega family. In terms of assembly, the RNAP catalytic core consists of 2 alpha, 1 beta, 1 beta' and 1 omega subunit. When a sigma factor is associated with the core the holoenzyme is formed, which can initiate transcription.

It catalyses the reaction RNA(n) + a ribonucleoside 5'-triphosphate = RNA(n+1) + diphosphate. Functionally, promotes RNA polymerase assembly. Latches the N- and C-terminal regions of the beta' subunit thereby facilitating its interaction with the beta and alpha subunits. The protein is DNA-directed RNA polymerase subunit omega of Aeromonas hydrophila subsp. hydrophila (strain ATCC 7966 / DSM 30187 / BCRC 13018 / CCUG 14551 / JCM 1027 / KCTC 2358 / NCIMB 9240 / NCTC 8049).